The primary structure comprises 282 residues: HMG box-containing protein R545 (282 aa).

Residues 1 to 282 form a disordered region; it reads MPKKTATKAN…KKEASDEESD (282 aa). Residues 16–29 are compositionally biased toward acidic residues; it reads DSENDSVVSEEEDN. Basic residues predominate over residues 70–87; sequence KGKVNAKKAPAKKAPVKK. Residues 93–121 show a composition bias toward acidic residues; it reads DSDNEEDEASEDGSDDEEDVVSADDSDSD. The segment covering 127–153 has biased composition (basic residues); that stretch reads KAAKKAPAKKAPAKKAPAKKAPAKKGK. Composition is skewed to basic and acidic residues over residues 176-187 and 197-214; these read TKKDGDKPKKPL and RMPELREEEPGKPYKEYM. A DNA-binding region (HMG box) is located at residues 183 to 252; sequence PKKPLSDYQK…KAPAKGGSKS (70 aa). Basic residues predominate over residues 253–273; sequence TAKKAPAKKAPAKKAPAKKSK.

The protein is HMG box-containing protein R545 of Acanthamoeba polyphaga mimivirus (APMV).